The chain runs to 572 residues: Proline--tRNA ligase (572 aa).

This sequence belongs to the class-II aminoacyl-tRNA synthetase family. ProS type 1 subfamily. In terms of assembly, homodimer.

Its subcellular location is the cytoplasm. The enzyme catalyses tRNA(Pro) + L-proline + ATP = L-prolyl-tRNA(Pro) + AMP + diphosphate. Its function is as follows. Catalyzes the attachment of proline to tRNA(Pro) in a two-step reaction: proline is first activated by ATP to form Pro-AMP and then transferred to the acceptor end of tRNA(Pro). As ProRS can inadvertently accommodate and process non-cognate amino acids such as alanine and cysteine, to avoid such errors it has two additional distinct editing activities against alanine. One activity is designated as 'pretransfer' editing and involves the tRNA(Pro)-independent hydrolysis of activated Ala-AMP. The other activity is designated 'posttransfer' editing and involves deacylation of mischarged Ala-tRNA(Pro). The misacylated Cys-tRNA(Pro) is not edited by ProRS. The polypeptide is Proline--tRNA ligase (Salmonella newport (strain SL254)).